The primary structure comprises 271 residues: MPELPEVEVTRLSFAFEIAGARVISVRIGKPLRWPLGCSPTQLAGRSVQAVRRRGKYLLIDLDQGLLLVHLGMSGSLSFARQLPPAGAHDHFEMTTTLGTLRLTDPRRFGAVVYAKGEDAPEAHKLLGKLGMEPLSDDFDVDRFHDELKRRRAAIKQVLLAGDTVVGVGNIYASEALFMAGIRPTLSAARLSRPRSARLHAAIRDVLARAVATGGSTLRDFSSAKGENGHFQLEAMVYARQGQPCRVCATPIKSLRQGQRSTFYCPHCQKA.

Pro2 acts as the Schiff-base intermediate with DNA in catalysis. Glu3 serves as the catalytic Proton donor. Lys56 serves as the catalytic Proton donor; for beta-elimination activity. Positions 89, 107, and 151 each coordinate DNA. The segment at 236 to 270 adopts an FPG-type zinc-finger fold; that stretch reads MVYARQGQPCRVCATPIKSLRQGQRSTFYCPHCQK. The active-site Proton donor; for delta-elimination activity is the Arg260.

The protein belongs to the FPG family. Monomer. Requires Zn(2+) as cofactor.

The catalysed reaction is Hydrolysis of DNA containing ring-opened 7-methylguanine residues, releasing 2,6-diamino-4-hydroxy-5-(N-methyl)formamidopyrimidine.. The enzyme catalyses 2'-deoxyribonucleotide-(2'-deoxyribose 5'-phosphate)-2'-deoxyribonucleotide-DNA = a 3'-end 2'-deoxyribonucleotide-(2,3-dehydro-2,3-deoxyribose 5'-phosphate)-DNA + a 5'-end 5'-phospho-2'-deoxyribonucleoside-DNA + H(+). Its function is as follows. Involved in base excision repair of DNA damaged by oxidation or by mutagenic agents. Acts as a DNA glycosylase that recognizes and removes damaged bases. Has a preference for oxidized purines, such as 7,8-dihydro-8-oxoguanine (8-oxoG). Has AP (apurinic/apyrimidinic) lyase activity and introduces nicks in the DNA strand. Cleaves the DNA backbone by beta-delta elimination to generate a single-strand break at the site of the removed base with both 3'- and 5'-phosphates. The chain is Formamidopyrimidine-DNA glycosylase from Albidiferax ferrireducens (strain ATCC BAA-621 / DSM 15236 / T118) (Rhodoferax ferrireducens).